The chain runs to 208 residues: Large ribosomal subunit protein uL4 (208 aa).

The interval 45-89 (RQGTHAHKNRSAVSGGGKKPWRQKGTGRARQGSTRSPQWRGGGTV) is disordered.

This sequence belongs to the universal ribosomal protein uL4 family. In terms of assembly, part of the 50S ribosomal subunit.

Functionally, one of the primary rRNA binding proteins, this protein initially binds near the 5'-end of the 23S rRNA. It is important during the early stages of 50S assembly. It makes multiple contacts with different domains of the 23S rRNA in the assembled 50S subunit and ribosome. Forms part of the polypeptide exit tunnel. The polypeptide is Large ribosomal subunit protein uL4 (Lactococcus lactis subsp. cremoris (strain MG1363)).